The sequence spans 45 residues: Temporin-SHf (45 aa).

Residues 1–10 form the signal peptide; it reads FLGTINLSLC. Positions 11–35 are excised as a propeptide; that stretch reads EEERDADEEERRDEPDESNVEVKKR. The residue at position 43 (Phe-43) is a Phenylalanine amide.

This sequence belongs to the frog skin active peptide (FSAP) family. Temporin subfamily.

It is found in the secreted. It localises to the target cell membrane. Functionally, non-amphipathic alpha-helical antimicrobial peptide with potent activity against some Gram-positive bacteria (including methicillin-resistant Staphylococcus aureus (MRSA)), weak activity against Gram-negative bacteria and no activity against fungi. Permeabilizates membranes through a detergent-like effect probably via the carpet mechanism. More precisely, it strongly and selectively perturbs anionic bilayers membranes by interacting with the polar headgroups and the glycerol backbone region of the phospholipids, hence disrupting the acyl chain packing of the bilayer. Is not active against Leishmania (promastigote and axenic amastigote forms). Does not show hemolytic activity. Does not show toxicity for human THP-1-derived macrophages. The protein is Temporin-SHf of Pelophylax saharicus (Sahara frog).